Here is a 178-residue protein sequence, read N- to C-terminus: Ribosome maturation factor RimM (178 aa).

Residues A101–F178 enclose the PRC barrel domain.

This sequence belongs to the RimM family. As to quaternary structure, binds ribosomal protein uS19.

The protein localises to the cytoplasm. An accessory protein needed during the final step in the assembly of 30S ribosomal subunit, possibly for assembly of the head region. Essential for efficient processing of 16S rRNA. May be needed both before and after RbfA during the maturation of 16S rRNA. It has affinity for free ribosomal 30S subunits but not for 70S ribosomes. This Pseudomonas putida (strain ATCC 47054 / DSM 6125 / CFBP 8728 / NCIMB 11950 / KT2440) protein is Ribosome maturation factor RimM.